The following is a 391-amino-acid chain: 4-coumarate--CoA ligase (391 aa).

The protein belongs to the ATP-dependent AMP-binding enzyme family.

It catalyses the reaction (E)-4-coumarate + ATP + CoA = (E)-4-coumaroyl-CoA + AMP + diphosphate. Converts p-coumaric acid into p-coumaryl CoA. This is necessary for the activation of the photoactive yellow protein (PYP) chromophore. This chain is 4-coumarate--CoA ligase (pcl), found in Halorhodospira halophila (Ectothiorhodospira halophila).